The sequence spans 416 residues: UDP-N-acetylglucosamine 1-carboxyvinyltransferase (416 aa).

22 to 23 (KN) lines the phosphoenolpyruvate pocket. Arg-92 is a UDP-N-acetyl-alpha-D-glucosamine binding site. The Proton donor role is filled by Cys-116. A 2-(S-cysteinyl)pyruvic acid O-phosphothioketal modification is found at Cys-116. 2 residues coordinate UDP-N-acetyl-alpha-D-glucosamine: Asp-306 and Ile-328.

Belongs to the EPSP synthase family. MurA subfamily.

Its subcellular location is the cytoplasm. The enzyme catalyses phosphoenolpyruvate + UDP-N-acetyl-alpha-D-glucosamine = UDP-N-acetyl-3-O-(1-carboxyvinyl)-alpha-D-glucosamine + phosphate. Its pathway is cell wall biogenesis; peptidoglycan biosynthesis. Its function is as follows. Cell wall formation. Adds enolpyruvyl to UDP-N-acetylglucosamine. The sequence is that of UDP-N-acetylglucosamine 1-carboxyvinyltransferase from Buchnera aphidicola subsp. Baizongia pistaciae (strain Bp).